The sequence spans 1053 residues: MNFSVLPPEINSALIFAGAGPEPMAAAATAWDGLAMELASAAASFGSVTSGLVGGAWQGASSSAMAAAAAPYAAWLAAAAVQAEQTAAQAAAMIAEFEAVKTAVVQPMLVAANRADLVSLVMSNLFGQNAPAIAAIEATYEQMWAADVSAMSAYHAGASAIASALSPFSKPLQNLAGLPAWLASGAPAAAMTAAAGIPALAGGPTAINLGIANVGGGNVGNANNGLANIGNANLGNYNFGSGNFGNSNIGSASLGNNNIGFGNLGSNNVGVGNLGNLNTGFANTGLGNFGFGNTGNNNIGIGLTGNNQIGIGGLNSGTGNFGLFNSGSGNVGFFNSGNGNFGIGNSGNFNTGGWNSGHGNTGFFNAGSFNTGMLDVGNANTGSLNTGSYNMGDFNPGSSNTGTFNTGNANTGFLNAGNINTGVFNIGHMNNGLFNTGDMNNGVFYRGVGQGSLQFSITTPDLTLPPLQIPGISVPAFSLPAITLPSLNIPAATTPANITVGAFSLPGLTLPSLNIPAATTPANITVGAFSLPGLTLPSLNIPAATTPANITVGAFSLPGLTLPSLNIPAATTPANITVGAFSLPGLTLPSLNIPAATTPANITVGAFSLPGLTLPSLNIPAATTPANITVSGFQLPPLSIPSVAIPPVTVPPITVGAFNLPPLQIPEVTIPQLTIPAGITIGGFSLPAIHTQPITVGQIGVGQFGLPSIGWDVFLSTPRITVPAFGIPFTLQFQTNVPALQPPGGGLSTFTNGALIFGEFDLPQLVVHPYTLTGPIVIGSFFLPAFNIPGIDVPAINVDGFTLPQITTPAITTPEFAIPPIGVGGFTLPQITTQEIITPELTINSIGVGGFTLPQITTPPITTPPLTIDPINLTGFTLPQITTPPITTPPLTIDPINLTGFTLPQITTPPITTPPLTIEPIGVGGFTTPPLTVPGIHLPSTTIGAFAIPGGPGYFNSSTAPSSGFFNSGAGGNSGFGNNGSGLSGWFNTNPAGLLGGSGYQNFGGLSSGFSNLGSGVSGFANRGILPFSVASVVSGFANIGTNLAGFFQGTTS.

The protein belongs to the mycobacterial PPE family.

This is an uncharacterized protein from Mycobacterium tuberculosis (strain ATCC 25618 / H37Rv).